We begin with the raw amino-acid sequence, 321 residues long: Glutaminase (321 aa).

7 residues coordinate substrate: serine 69, asparagine 120, glutamate 165, asparagine 172, tyrosine 196, tyrosine 248, and valine 266.

It belongs to the glutaminase family. In terms of assembly, homotetramer.

It catalyses the reaction L-glutamine + H2O = L-glutamate + NH4(+). This chain is Glutaminase, found in Bacteroides fragilis (strain YCH46).